Reading from the N-terminus, the 101-residue chain is Putative regulatory protein Csac_2087 (101 aa).

Belongs to the RemA family.

The polypeptide is Putative regulatory protein Csac_2087 (Caldicellulosiruptor saccharolyticus (strain ATCC 43494 / DSM 8903 / Tp8T 6331)).